The primary structure comprises 122 residues: Large ribosomal subunit protein uL18 (122 aa).

Basic residues predominate over residues 1–19 (MTKLSRKLQTQKRHRRLRR). Positions 1-21 (MTKLSRKLQTQKRHRRLRRSV) are disordered.

Belongs to the universal ribosomal protein uL18 family. Part of the 50S ribosomal subunit; part of the 5S rRNA/L5/L18/L25 subcomplex. Contacts the 5S and 23S rRNAs.

Its function is as follows. This is one of the proteins that bind and probably mediate the attachment of the 5S RNA into the large ribosomal subunit, where it forms part of the central protuberance. The protein is Large ribosomal subunit protein uL18 of Prochlorococcus marinus (strain MIT 9312).